A 112-amino-acid polypeptide reads, in one-letter code: Large ribosomal subunit protein bL17 (112 aa).

The protein belongs to the bacterial ribosomal protein bL17 family. Part of the 50S ribosomal subunit. Contacts protein L32.

This Desulforamulus reducens (strain ATCC BAA-1160 / DSM 100696 / MI-1) (Desulfotomaculum reducens) protein is Large ribosomal subunit protein bL17.